We begin with the raw amino-acid sequence, 308 residues long: Serine/threonine-protein phosphatase 4 catalytic subunit (308 aa).

Mn(2+) contacts are provided by Asp-51, His-53, Asp-79, and Asn-111. The active-site Proton donor is His-112. 2 residues coordinate Mn(2+): His-161 and His-235.

The protein belongs to the PPP phosphatase family. PP-4 (PP-X) subfamily. As to quaternary structure, catalytic subunit of the histone H2A phosphatase complex (HTP-C) containing PPH3, PSY2 and PSY4. Inactivated in a complex with phosphatase methylesterase PPE1 (PP2Ai). Interacts with phosphatase 2A activator RRD1, which can reactivate PP2Ai by dissociating the catalytic subunit from the complex. Interacts with SPT5 and TAP42. It depends on Mn(2+) as a cofactor. Post-translationally, reversibly methyl esterified on Leu-308 by leucine carboxyl methyltransferase 1 (PPM1) and protein phosphatase methylesterase 1 (PPE1). Carboxyl methylation influences the affinity of the catalytic subunit for the different regulatory subunits, thereby modulating the PP2A holoenzyme's substrate specificity, enzyme activity and cellular localization.

The protein localises to the cytoplasm. It localises to the nucleus. The enzyme catalyses O-phospho-L-seryl-[protein] + H2O = L-seryl-[protein] + phosphate. It catalyses the reaction O-phospho-L-threonyl-[protein] + H2O = L-threonyl-[protein] + phosphate. Forms the histone H2A phosphatase complex in association with the regulatory subunits PSY2 and PSY4, which dephosphorylates H2AS128ph (gamma-H2A) that has been displaced from sites of DNA lesions in the double-stranded DNA break repair process. Dephosphorylation is necessary for efficient recovery from the DNA damage checkpoint. PPH3 is directly involved in the dephosphorylation and activation of the transcription factor GLN3 in response to nutrient availability. The sequence is that of Serine/threonine-protein phosphatase 4 catalytic subunit (PPH3) from Saccharomyces cerevisiae (strain ATCC 204508 / S288c) (Baker's yeast).